Reading from the N-terminus, the 1382-residue chain is DNA-directed RNA polymerase subunit beta'' (1382 aa).

Residues cysteine 224, cysteine 294, cysteine 301, and cysteine 304 each contribute to the Zn(2+) site.

This sequence belongs to the RNA polymerase beta' chain family. RpoC2 subfamily. In plastids the minimal PEP RNA polymerase catalytic core is composed of four subunits: alpha, beta, beta', and beta''. When a (nuclear-encoded) sigma factor is associated with the core the holoenzyme is formed, which can initiate transcription. It depends on Zn(2+) as a cofactor.

It localises to the plastid. Its subcellular location is the chloroplast. The enzyme catalyses RNA(n) + a ribonucleoside 5'-triphosphate = RNA(n+1) + diphosphate. Functionally, DNA-dependent RNA polymerase catalyzes the transcription of DNA into RNA using the four ribonucleoside triphosphates as substrates. In Dioscorea elephantipes (Elephant's foot yam), this protein is DNA-directed RNA polymerase subunit beta''.